The chain runs to 549 residues: Myotubularin-related protein 9 (549 aa).

Met-1 is subject to N-acetylmethionine. The GRAM domain occupies 4-99; sequence AELIKTPRVD…LNIASSIEAL (96 aa). Residues 123–498 form the Myotubularin phosphatase domain; it reads GWHSFLPEQE…QSLQLWEGIF (376 aa). Residues 508–542 adopt a coiled-coil conformation; sequence LDEAYEEMVNIIEYNKELQAKVNLLRRQLAELETE. Ser-548 carries the post-translational modification Phosphoserine.

This sequence belongs to the protein-tyrosine phosphatase family. Non-receptor class myotubularin subfamily. As to quaternary structure, homodimer. Heterodimer (via C-terminus) with lipid phosphatase MTMR6 (via C-terminus). Heterodimer (via coiled coil domain) with lipid phosphatase MTMR7 (via C-terminus). Heterodimer with lipid phosphatase MTMR8.

It localises to the cytoplasm. Its subcellular location is the cell projection. The protein localises to the ruffle membrane. It is found in the perinuclear region. The protein resides in the endoplasmic reticulum. Its function is as follows. Acts as an adapter for myotubularin-related phosphatases. Increases lipid phosphatase MTMR6 catalytic activity, specifically towards phosphatidylinositol 3,5-bisphosphate, and MTMR6 binding affinity for phosphorylated phosphatidylinositols. Positively regulates lipid phosphatase MTMR7 catalytic activity. Increases MTMR8 catalytic activity towards phosphatidylinositol 3-phosphate. The formation of the MTMR6-MTMR9 complex, stabilizes both MTMR6 and MTMR9 protein levels. Stabilizes MTMR8 protein levels. Plays a role in the late stages of macropinocytosis possibly by regulating MTMR6-mediated dephosphorylation of phosphatidylinositol 3-phosphate in membrane ruffles. Negatively regulates autophagy, in part via its association with MTMR8. Negatively regulates DNA damage-induced apoptosis, in part via its association with MTMR6. Does not bind mono-, di- and tri-phosphorylated phosphatidylinositols, phosphatidic acid and phosphatidylserine. The protein is Myotubularin-related protein 9 (MTMR9) of Bos taurus (Bovine).